A 216-amino-acid polypeptide reads, in one-letter code: Pyridoxine/pyridoxamine 5'-phosphate oxidase (216 aa).

FMN-binding positions include 63 to 68, 78 to 79, Lys-85, and Gln-107; these read RMVLMK and YS. Residue Lys-68 participates in substrate binding. Substrate-binding residues include Tyr-125 and Arg-129. Residues 142–143 and Trp-187 contribute to the FMN site; that span reads QS. Residue 193 to 195 coordinates substrate; it reads RLH. Arg-197 contacts FMN.

This sequence belongs to the pyridoxamine 5'-phosphate oxidase family. Homodimer. The cofactor is FMN.

It catalyses the reaction pyridoxamine 5'-phosphate + O2 + H2O = pyridoxal 5'-phosphate + H2O2 + NH4(+). It carries out the reaction pyridoxine 5'-phosphate + O2 = pyridoxal 5'-phosphate + H2O2. It participates in cofactor metabolism; pyridoxal 5'-phosphate salvage; pyridoxal 5'-phosphate from pyridoxamine 5'-phosphate: step 1/1. It functions in the pathway cofactor metabolism; pyridoxal 5'-phosphate salvage; pyridoxal 5'-phosphate from pyridoxine 5'-phosphate: step 1/1. Catalyzes the oxidation of either pyridoxine 5'-phosphate (PNP) or pyridoxamine 5'-phosphate (PMP) into pyridoxal 5'-phosphate (PLP). This is Pyridoxine/pyridoxamine 5'-phosphate oxidase from Bradyrhizobium sp. (strain BTAi1 / ATCC BAA-1182).